A 398-amino-acid chain; its full sequence is Putative F-box protein At3g17620 (398 aa).

In terms of domain architecture, F-box spans 1–45 (MMSDLPRDLLEERLSRVPVKSLREARFTCKNWKTLSKKRSFTKKH).

The protein is Putative F-box protein At3g17620 of Arabidopsis thaliana (Mouse-ear cress).